We begin with the raw amino-acid sequence, 665 residues long: Pentatricopeptide repeat-containing protein At3g02490, mitochondrial (665 aa).

The N-terminal 37 residues, 1–37, are a transit peptide targeting the mitochondrion; it reads MRYQWRSLLFRSYRSSPRPFLSHHSRFQVISNSTRSF. 8 PPR repeats span residues 280–314, 315–349, 352–388, 389–423, 424–458, 459–493, 495–530, and 536–570; these read DEKT…GYEM, EMET…SISN, TPHC…GNVV, PDVM…GYVP, SGDL…GNHL, DDKA…EGVS, AGYA…QLKP, and KIMV…GFPP.

The protein belongs to the PPR family. P subfamily.

Its subcellular location is the mitochondrion. This chain is Pentatricopeptide repeat-containing protein At3g02490, mitochondrial, found in Arabidopsis thaliana (Mouse-ear cress).